The following is a 157-amino-acid chain: Protein Smg (157 aa).

Belongs to the Smg family.

This chain is Protein Smg, found in Escherichia coli O139:H28 (strain E24377A / ETEC).